A 500-amino-acid chain; its full sequence is Probable malate:quinone oxidoreductase (500 aa).

This sequence belongs to the MQO family. FAD serves as cofactor.

The enzyme catalyses (S)-malate + a quinone = a quinol + oxaloacetate. It functions in the pathway carbohydrate metabolism; tricarboxylic acid cycle; oxaloacetate from (S)-malate (quinone route): step 1/1. In Corynebacterium aurimucosum (strain ATCC 700975 / DSM 44827 / CIP 107346 / CN-1) (Corynebacterium nigricans), this protein is Probable malate:quinone oxidoreductase.